The chain runs to 207 residues: Tereporin-Ts1 (207 aa).

Residues 1–11 (VIFALVLGNAS) form the signal peptide. Residues 35-54 (SAGTSLASTILSGLAASGYR) form an N-terminal region region. G111, S129, P131, Y164, and Y165 together coordinate phosphocholine.

The protein belongs to the actinoporin family. Conoidea subfamily. In terms of assembly, octamer or nonamer in membranes. Monomer in the soluble state. In terms of tissue distribution, expressed by the venom duct.

Its subcellular location is the secreted. The protein localises to the nematocyst. The protein resides in the target cell membrane. Its function is as follows. Pore-forming protein that forms pores of around 1 nm and causes cardiac stimulation and cytolysis. This is Tereporin-Ts1 from Terebra subulata (Chocolate spotted auger).